The chain runs to 68 residues: MKQPSLDILLSKVDSKYTLVLAAAKRARTLMEDPEFEVNYRGSKPVSLAFDEIAKGKYHFELTREGIK.

The protein belongs to the RNA polymerase subunit omega family. In terms of assembly, the RNAP catalytic core consists of 2 alpha, 1 beta, 1 beta' and 1 omega subunit. When a sigma factor is associated with the core the holoenzyme is formed, which can initiate transcription.

The enzyme catalyses RNA(n) + a ribonucleoside 5'-triphosphate = RNA(n+1) + diphosphate. Functionally, promotes RNA polymerase assembly. Latches the N- and C-terminal regions of the beta' subunit thereby facilitating its interaction with the beta and alpha subunits. This is DNA-directed RNA polymerase subunit omega from Desulfitobacterium hafniense (strain DSM 10664 / DCB-2).